A 143-amino-acid chain; its full sequence is Small ribosomal subunit protein eS12 (143 aa).

The protein belongs to the eukaryotic ribosomal protein eS12 family.

This Hordeum vulgare (Barley) protein is Small ribosomal subunit protein eS12 (RPS12).